Reading from the N-terminus, the 263-residue chain is 3-deoxy-manno-octulosonate cytidylyltransferase 1 (263 aa).

Belongs to the KdsB family.

The protein resides in the cytoplasm. It catalyses the reaction 3-deoxy-alpha-D-manno-oct-2-ulosonate + CTP = CMP-3-deoxy-beta-D-manno-octulosonate + diphosphate. It participates in nucleotide-sugar biosynthesis; CMP-3-deoxy-D-manno-octulosonate biosynthesis; CMP-3-deoxy-D-manno-octulosonate from 3-deoxy-D-manno-octulosonate and CTP: step 1/1. Its pathway is bacterial outer membrane biogenesis; lipopolysaccharide biosynthesis. Its function is as follows. Activates KDO (a required 8-carbon sugar) for incorporation into bacterial lipopolysaccharide in Gram-negative bacteria. This is 3-deoxy-manno-octulosonate cytidylyltransferase 1 from Burkholderia ambifaria (strain MC40-6).